A 529-amino-acid chain; its full sequence is Serine/threonine-protein kinase RIO2 (529 aa).

The Protein kinase domain maps to 97 to 273 (VGNQIGIGKE…RDVTCVRTFF (177 aa)). K123 contributes to the ATP binding site. D228 (proton acceptor) is an active-site residue. Disordered stretches follow at residues 331–366 (RNRQ…KDHE) and 411–452 (EGYK…GHVA). Positions 337 to 346 (DLGEDEDDSD) are enriched in acidic residues. Basic and acidic residues predominate over residues 411–428 (EGYKDIELPPEDFKRPAD). Over residues 429–447 (SENDDENDEDEEEGEEEDA) the composition is skewed to acidic residues.

This sequence belongs to the protein kinase superfamily. RIO-type Ser/Thr kinase family. The cofactor is Mg(2+). As to expression, expressed in pharynx (metacorpus and posterior bulbus). Expression is restricted to adult stage.

It catalyses the reaction L-seryl-[protein] + ATP = O-phospho-L-seryl-[protein] + ADP + H(+). The enzyme catalyses L-threonyl-[protein] + ATP = O-phospho-L-threonyl-[protein] + ADP + H(+). Functionally, required for larval development. The sequence is that of Serine/threonine-protein kinase RIO2 from Caenorhabditis elegans.